A 144-amino-acid polypeptide reads, in one-letter code: Putative sugar phosphate isomerase RT0290 (144 aa).

His-12 is a substrate binding site. The active-site Proton donor is the His-101. Position 135 (Arg-135) interacts with substrate.

The protein belongs to the LacAB/RpiB family.

In Rickettsia typhi (strain ATCC VR-144 / Wilmington), this protein is Putative sugar phosphate isomerase RT0290.